The primary structure comprises 578 residues: Probable arginine--tRNA ligase, mitochondrial (578 aa).

The N-terminal 16 residues, 1 to 16 (MACGFRRSIASQLSRV), are a transit peptide targeting the mitochondrion. Residues 133–135 (SPN), histidine 144, tyrosine 322, aspartate 326, and glutamine 350 contribute to the L-arginine site. The 'HIGH' region motif lies at 133-144 (SPNVAKKFHVGH). The residue at position 568 (lysine 568) is an N6-acetyllysine.

It belongs to the class-I aminoacyl-tRNA synthetase family.

The protein resides in the mitochondrion membrane. It catalyses the reaction tRNA(Arg) + L-arginine + ATP = L-arginyl-tRNA(Arg) + AMP + diphosphate. Functionally, catalyzes the attachment of arginine to tRNA(Arg) in a two-step reaction: arginine is first activated by ATP to form Arg-AMP and then transferred to the acceptor end of tRNA(Arg). The chain is Probable arginine--tRNA ligase, mitochondrial (RARS2) from Bos taurus (Bovine).